Consider the following 101-residue polypeptide: Co-chaperonin GroES 1 (101 aa).

It belongs to the GroES chaperonin family. Heptamer of 7 subunits arranged in a ring. Interacts with the chaperonin GroEL.

The protein localises to the cytoplasm. In terms of biological role, together with the chaperonin GroEL, plays an essential role in assisting protein folding. The GroEL-GroES system forms a nano-cage that allows encapsulation of the non-native substrate proteins and provides a physical environment optimized to promote and accelerate protein folding. GroES binds to the apical surface of the GroEL ring, thereby capping the opening of the GroEL channel. In Rhodopirellula baltica (strain DSM 10527 / NCIMB 13988 / SH1), this protein is Co-chaperonin GroES 1.